The following is a 141-amino-acid chain: Small ribosomal subunit protein uS12 (141 aa).

Position 89 is a 3-methylthioaspartic acid (Asp-89). The disordered stretch occupies residues 104–141 (ASGAVGPSNTNKLNRNVSRSKYGVKRPKAGAKPASKAK). The segment covering 110–122 (PSNTNKLNRNVSR) has biased composition (polar residues). The span at 125 to 141 (YGVKRPKAGAKPASKAK) shows a compositional bias: basic residues.

This sequence belongs to the universal ribosomal protein uS12 family. Part of the 30S ribosomal subunit. Contacts proteins S8 and S17. May interact with IF1 in the 30S initiation complex.

Functionally, with S4 and S5 plays an important role in translational accuracy. Interacts with and stabilizes bases of the 16S rRNA that are involved in tRNA selection in the A site and with the mRNA backbone. Located at the interface of the 30S and 50S subunits, it traverses the body of the 30S subunit contacting proteins on the other side and probably holding the rRNA structure together. The combined cluster of proteins S8, S12 and S17 appears to hold together the shoulder and platform of the 30S subunit. In Methylacidiphilum infernorum (isolate V4) (Methylokorus infernorum (strain V4)), this protein is Small ribosomal subunit protein uS12.